The chain runs to 56 residues: Aspartyl-phosphate phosphatase YisI (56 aa).

The protein belongs to the spo0E family.

Functionally, aspartyl-phosphate phosphatase which specifically dephosphorylates the sporulation transcription factor Spo0A-P and negatively regulates the sporulation initiation pathway in order to control the proper timing of sporulation. The sequence is that of Aspartyl-phosphate phosphatase YisI (yisI) from Bacillus subtilis (strain 168).